A 269-amino-acid polypeptide reads, in one-letter code: Interleukin-1 beta (269 aa).

A propeptide spanning residues 1 to 112 (MAMVPEITCD…EEPITFKNCD (112 aa)) is cleaved from the precursor.

This sequence belongs to the IL-1 family. Monomer. In its precursor form, weakly interacts with full-length MEFV; the mature cytokine does not interact at all. Interacts with integrins ITGAV:ITGBV and ITGA5:ITGB1; integrin-binding is required for IL1B signaling. Interacts with cargo receptor TMED10; the interaction is direct and is required for the secretion of IL1B mature form. Interacts with HSP90AB1; the interaction facilitates cargo translocation into the ERGIC. Interacts with HSP90B1; the interaction facilitates cargo translocation into the ERGIC.

It is found in the cytoplasm. The protein resides in the cytosol. It localises to the secreted. The protein localises to the lysosome. Its subcellular location is the extracellular exosome. Functionally, potent pro-inflammatory cytokine. Initially discovered as the major endogenous pyrogen, induces prostaglandin synthesis, neutrophil influx and activation, T-cell activation and cytokine production, B-cell activation and antibody production, and fibroblast proliferation and collagen production. Promotes Th17 differentiation of T-cells. Synergizes with IL12/interleukin-12 to induce IFNG synthesis from T-helper 1 (Th1) cells. Plays a role in angiogenesis by inducing VEGF production synergistically with TNF and IL6. Involved in transduction of inflammation downstream of pyroptosis: its mature form is specifically released in the extracellular milieu by passing through the gasdermin-D (GSDMD) pore. The protein is Interleukin-1 beta (IL1B) of Trichosurus vulpecula (Brush-tailed possum).